The sequence spans 105 residues: Endogenous retrovirus group K member 16 Rec protein (105 aa).

The tract at residues Met1–Ser41 is disordered. Over residues Ala10–Arg20 the composition is skewed to basic residues. The Nuclear localization signal motif lies at Arg13–Arg20. The Nuclear export signal signature appears at Trp50 to Leu59.

Forms homodimers, homotrimers, and homotetramers via a C-terminal domain. Associates with XPO1 and with ZNF145.

Its subcellular location is the cytoplasm. The protein resides in the nucleus. It localises to the nucleolus. Its function is as follows. Retroviral replication requires the nuclear export and translation of unspliced, singly-spliced and multiply-spliced derivatives of the initial genomic transcript. Rec interacts with a highly structured RNA element (RcRE) present in the viral 3'LTR and recruits the cellular nuclear export machinery. This permits export to the cytoplasm of unspliced genomic or incompletely spliced subgenomic viral transcripts. The polypeptide is Endogenous retrovirus group K member 16 Rec protein (ERVK-16) (Homo sapiens (Human)).